Here is a 180-residue protein sequence, read N- to C-terminus: Large ribosomal subunit protein uL6 (180 aa).

This sequence belongs to the universal ribosomal protein uL6 family. In terms of assembly, part of the 50S ribosomal subunit.

Functionally, this protein binds to the 23S rRNA, and is important in its secondary structure. It is located near the subunit interface in the base of the L7/L12 stalk, and near the tRNA binding site of the peptidyltransferase center. The chain is Large ribosomal subunit protein uL6 from Desulforapulum autotrophicum (strain ATCC 43914 / DSM 3382 / VKM B-1955 / HRM2) (Desulfobacterium autotrophicum).